A 529-amino-acid chain; its full sequence is Structure-specific endonuclease subunit SLX1 homolog 1 (529 aa).

Residues 4–89 form the GIY-YIG domain; the sequence is RFHCVYLLTS…PTKSTRLKTQ (86 aa). Residues 231–364 form an SLX1-type zinc finger; the sequence is CALCSLPLRS…PCQPCPCPLC (134 aa). 3 disordered regions span residues 275-305, 409-437, and 470-501; these read VTMGQSTRNERSGEYSNKIKDDSNDGTMDAH, NSSLTERKSRRKATPALGQKRNRGEYCGD, and SVSLPPSRDEGYACDSSRRGVGGSKHTTRMTD. A compositionally biased stretch (basic and acidic residues) spans 282 to 297; that stretch reads RNERSGEYSNKIKDDS.

Belongs to the SLX1 family. As to quaternary structure, forms a heterodimer with a member of the SLX4 family. A divalent metal cation serves as cofactor.

It is found in the nucleus. Functionally, catalytic subunit of a heterodimeric structure-specific endonuclease that resolves DNA secondary structures generated during DNA repair and recombination. Has endonuclease activity towards branched DNA substrates, introducing single-strand cuts in duplex DNA close to junctions with ss-DNA. This is Structure-specific endonuclease subunit SLX1 homolog 1 from Trypanosoma cruzi (strain CL Brener).